Reading from the N-terminus, the 388-residue chain is Na(+)/H(+) antiporter NhaA (388 aa).

Topologically, residues 1–11 (MKHLHRFFSSD) are cytoplasmic. Residues 12-31 (ASGGIILIIAAILAMIMANS) traverse the membrane as a helical segment. The Periplasmic segment spans residues 32-58 (GATSGWYHDFLETPVQLRVGSLEINKN). A helical transmembrane segment spans residues 59-80 (MLLWINDALMAVFFLLVGLEVK). At 81 to 96 (RELMQGSLASLRQAAF) the chain is on the cytoplasmic side. The helical transmembrane segment at 97–116 (PVIAAIGGMIVPALLYLAFN) threads the bilayer. Residues 117 to 122 (YADPIT) are Periplasmic-facing. A helical transmembrane segment spans residues 123–130 (REGWAIPA). Over 131-154 (ATDIAFALGVLALLGSRVPLALKI) the chain is Cytoplasmic. A helical membrane pass occupies residues 155-176 (FLMALAIIDDLGAIIIIALFYT). Over 177 to 180 (NDLS) the chain is Periplasmic. The chain crosses the membrane as a helical span at residues 181 to 200 (MASLGVAAVAIAVLAVLNLC). The Cytoplasmic segment spans residues 201–204 (GVRR). Residues 205-222 (TGVYILVGVVLWTAVLKS) form a helical membrane-spanning segment. Position 223 (Gly223) is a topological domain, periplasmic. Residues 224–236 (VHATLAGVIVGFF) form a helical membrane-spanning segment. Residues 237–253 (IPLKEKHGRSPAKRLEH) lie on the Cytoplasmic side of the membrane. Residues 254 to 272 (VLHPWVAYLILPLFAFANA) traverse the membrane as a helical segment. The Periplasmic segment spans residues 273 to 286 (GVSLQGVTLDGLTS). Residues 287-310 (ILPLGIIAGLLIGKPLGISLFCWL) traverse the membrane as a helical segment. The Cytoplasmic portion of the chain corresponds to 311 to 339 (ALRLKLAHLPEGTTYQQIMAVGILCGIGF). A helical transmembrane segment spans residues 340 to 350 (TMSIFIASLAF). The Periplasmic portion of the chain corresponds to 351-357 (GSVDPEL). Residues 358–380 (INWAKLGILVGSISSAVIGYSWL) form a helical membrane-spanning segment. The Cytoplasmic segment spans residues 381–388 (RVRLRPSV).

The protein belongs to the NhaA Na(+)/H(+) (TC 2.A.33) antiporter family.

It localises to the cell inner membrane. The enzyme catalyses Na(+)(in) + 2 H(+)(out) = Na(+)(out) + 2 H(+)(in). Functionally, na(+)/H(+) antiporter that extrudes sodium in exchange for external protons. The sequence is that of Na(+)/H(+) antiporter NhaA from Escherichia coli O9:H4 (strain HS).